The primary structure comprises 565 residues: Sulfite reductase [NADPH] hemoprotein beta-component (565 aa).

[4Fe-4S] cluster contacts are provided by C429, C435, C474, and C478. C478 provides a ligand contact to siroheme.

The protein belongs to the nitrite and sulfite reductase 4Fe-4S domain family. Alpha(8)-beta(8). The alpha component is a flavoprotein, the beta component is a hemoprotein. It depends on siroheme as a cofactor. Requires [4Fe-4S] cluster as cofactor.

It carries out the reaction hydrogen sulfide + 3 NADP(+) + 3 H2O = sulfite + 3 NADPH + 4 H(+). Its pathway is sulfur metabolism; hydrogen sulfide biosynthesis; hydrogen sulfide from sulfite (NADPH route): step 1/1. Its function is as follows. Component of the sulfite reductase complex that catalyzes the 6-electron reduction of sulfite to sulfide. This is one of several activities required for the biosynthesis of L-cysteine from sulfate. This is Sulfite reductase [NADPH] hemoprotein beta-component from Shewanella halifaxensis (strain HAW-EB4).